Reading from the N-terminus, the 466-residue chain is 55 kDa erythrocyte membrane protein (466 aa).

Position 2 is an N-acetylthreonine (Thr-2). Residues Ser-13 and Ser-19 each carry the phosphoserine modification. Thr-49 is subject to Phosphothreonine. Ser-52, Ser-57, and Ser-110 each carry phosphoserine. Residues 71–152 (LIQIEKVTEE…MISLKVIPNQ (82 aa)) enclose the PDZ domain. Positions 158–228 (ALQMFMRAQF…PSPELQEWRV (71 aa)) constitute an SH3 domain. The residue at position 243 (Ser-243) is a Phosphoserine. Residues 268–466 (VVSYEEVVRL…PQWVPVSWVY (199 aa)) are interaction with PALS1. Residues 282–451 (RKTLVLIGAS…TLKKLQEAFD (170 aa)) enclose the Guanylate kinase-like domain.

It belongs to the MAGUK family. As to quaternary structure, heterodimer with PALS1. Interacts with DLG5 and NF2. Interacts (via guanylate kinase-like domain) with WHRN (via third PDZ domain). Post-translationally, palmitoylated.

It localises to the cell membrane. It is found in the cell projection. The protein resides in the stereocilium. Its function is as follows. Essential regulator of neutrophil polarity. Regulates neutrophil polarization by regulating AKT1 phosphorylation through a mechanism that is independent of PIK3CG activity. The polypeptide is 55 kDa erythrocyte membrane protein (MPP1) (Papio anubis (Olive baboon)).